We begin with the raw amino-acid sequence, 74 residues long: Toxin BmKaTx17 (74 aa).

The N-terminal stretch at L1 to S8 is a signal peptide. Residues R10–H72 enclose the LCN-type CS-alpha/beta domain. 4 cysteine pairs are disulfide-bonded: C20-C71, C24-C44, C30-C54, and C34-C56. A propeptide spans R73–R74 (removed by a carboxypeptidase).

The protein belongs to the long (4 C-C) scorpion toxin superfamily. Sodium channel inhibitor family. Alpha subfamily. As to expression, expressed by the venom gland.

Its subcellular location is the secreted. In terms of biological role, alpha toxins bind voltage-independently at site-3 of sodium channels (Nav) and inhibit the inactivation of the activated channels, thereby blocking neuronal transmission. The sequence is that of Toxin BmKaTx17 from Olivierus martensii (Manchurian scorpion).